The primary structure comprises 373 residues: Dual-specificity RNA methyltransferase RlmN (373 aa).

The active-site Proton acceptor is the E94. The region spanning 100 to 339 (EDDRATLCVS…VIVRKTRGDD (240 aa)) is the Radical SAM core domain. C107 and C344 form a disulfide bridge. [4Fe-4S] cluster-binding residues include C114, C118, and C121. S-adenosyl-L-methionine-binding positions include 168 to 169 (GE), S200, 222 to 224 (SIH), and N301. C344 serves as the catalytic S-methylcysteine intermediate.

Belongs to the radical SAM superfamily. RlmN family. [4Fe-4S] cluster serves as cofactor.

The protein localises to the cytoplasm. The catalysed reaction is adenosine(2503) in 23S rRNA + 2 reduced [2Fe-2S]-[ferredoxin] + 2 S-adenosyl-L-methionine = 2-methyladenosine(2503) in 23S rRNA + 5'-deoxyadenosine + L-methionine + 2 oxidized [2Fe-2S]-[ferredoxin] + S-adenosyl-L-homocysteine. It carries out the reaction adenosine(37) in tRNA + 2 reduced [2Fe-2S]-[ferredoxin] + 2 S-adenosyl-L-methionine = 2-methyladenosine(37) in tRNA + 5'-deoxyadenosine + L-methionine + 2 oxidized [2Fe-2S]-[ferredoxin] + S-adenosyl-L-homocysteine. Its function is as follows. Specifically methylates position 2 of adenine 2503 in 23S rRNA and position 2 of adenine 37 in tRNAs. m2A2503 modification seems to play a crucial role in the proofreading step occurring at the peptidyl transferase center and thus would serve to optimize ribosomal fidelity. The protein is Dual-specificity RNA methyltransferase RlmN of Shewanella baltica (strain OS223).